The following is a 296-amino-acid chain: Large ribosomal subunit protein uL15m (296 aa).

Residues 1 to 20 (MAASGGSGGKATELLRCLPR) constitute a mitochondrion transit peptide. Positions 25–66 (NLRPNPGARHREKRRGRGIHGGRKSGRGHKGETQRGNQPRLG) are disordered. Residues 32 to 52 (ARHREKRRGRGIHGGRKSGRG) show a composition bias toward basic residues.

The protein belongs to the universal ribosomal protein uL15 family. As to quaternary structure, component of the mitochondrial ribosome large subunit (39S) which comprises a 16S rRNA and about 50 distinct proteins.

The protein resides in the mitochondrion. The chain is Large ribosomal subunit protein uL15m (mrpl15) from Xenopus laevis (African clawed frog).